The following is a 265-amino-acid chain: S-acyl fatty acid synthase thioesterase, medium chain (265 aa).

Residue methionine 1 is modified to N-acetylmethionine. Active-site residues include serine 101 and histidine 237.

It belongs to the thioesterase family. As to quaternary structure, interacts (via C-terminus) with FASN. As to expression, detected both in lactating and non-lactating breast epithelium (at protein level). Isoform 2 is up-regulated in bone marrow-derived mononuclear cells of rheumatoid arthritis patients.

Its subcellular location is the cytoplasm. It localises to the cytosol. It carries out the reaction (9Z)-octadecenoyl-[ACP] + H2O = (9Z)-octadecenoate + holo-[ACP] + H(+). The enzyme catalyses decanoyl-CoA + H2O = decanoate + CoA + H(+). It catalyses the reaction dodecanoyl-CoA + H2O = dodecanoate + CoA + H(+). The catalysed reaction is tetradecanoyl-CoA + H2O = tetradecanoate + CoA + H(+). It carries out the reaction hexadecanoyl-CoA + H2O = hexadecanoate + CoA + H(+). Functionally, contributes to the release of free fatty acids from fatty acid synthase (FASN). Has broad substrate specificity, giving rise to a range of free fatty acids with chain lengths between 10 and 16 carbon atoms (C10 - C16). The sequence is that of S-acyl fatty acid synthase thioesterase, medium chain from Homo sapiens (Human).